A 135-amino-acid chain; its full sequence is Ribonuclease P protein component (135 aa).

This sequence belongs to the RnpA family. Consists of a catalytic RNA component (M1 or rnpB) and a protein subunit.

The enzyme catalyses Endonucleolytic cleavage of RNA, removing 5'-extranucleotides from tRNA precursor.. RNaseP catalyzes the removal of the 5'-leader sequence from pre-tRNA to produce the mature 5'-terminus. It can also cleave other RNA substrates such as 4.5S RNA. The protein component plays an auxiliary but essential role in vivo by binding to the 5'-leader sequence and broadening the substrate specificity of the ribozyme. The polypeptide is Ribonuclease P protein component (Pseudomonas paraeruginosa (strain DSM 24068 / PA7) (Pseudomonas aeruginosa (strain PA7))).